The primary structure comprises 164 residues: Phosphopantetheine adenylyltransferase (164 aa).

Residue Ser-9 coordinates substrate. Residues 9-10 and His-17 each bind ATP; that span reads SF. Lys-41, Val-78, and Arg-92 together coordinate substrate. ATP is bound by residues 93 to 95, Glu-103, and 128 to 134; these read GLR and VRTITAT.

The protein belongs to the bacterial CoaD family. As to quaternary structure, homohexamer. Mg(2+) is required as a cofactor.

Its subcellular location is the cytoplasm. The catalysed reaction is (R)-4'-phosphopantetheine + ATP + H(+) = 3'-dephospho-CoA + diphosphate. The protein operates within cofactor biosynthesis; coenzyme A biosynthesis; CoA from (R)-pantothenate: step 4/5. Functionally, reversibly transfers an adenylyl group from ATP to 4'-phosphopantetheine, yielding dephospho-CoA (dPCoA) and pyrophosphate. The sequence is that of Phosphopantetheine adenylyltransferase from Brucella anthropi (strain ATCC 49188 / DSM 6882 / CCUG 24695 / JCM 21032 / LMG 3331 / NBRC 15819 / NCTC 12168 / Alc 37) (Ochrobactrum anthropi).